Reading from the N-terminus, the 221-residue chain is Ependymin (221 aa).

A signal peptide spans 1–21; sequence MQAFAVAALSIWLCLGATTLA. 3 N-linked (GlcNAc...) asparagine glycosylation sites follow: Asn37, Asn77, and Asn101.

Belongs to the ependymin family. Forms disulfide-linked dimers. Post-translationally, binds calcium through the terminal sialic acids. EPDs are synthesized in the meninx and secreted in the cerebrospinal fluid.

It is found in the secreted. In terms of biological role, may play a role in neural plasticity. May be involved during axon regeneration. This Esox lucius (Northern pike) protein is Ependymin (epd).